Consider the following 128-residue polypeptide: Large ribosomal subunit protein uL22 (128 aa).

Belongs to the universal ribosomal protein uL22 family. In terms of assembly, part of the 50S ribosomal subunit.

In terms of biological role, this protein binds specifically to 23S rRNA; its binding is stimulated by other ribosomal proteins, e.g. L4, L17, and L20. It is important during the early stages of 50S assembly. It makes multiple contacts with different domains of the 23S rRNA in the assembled 50S subunit and ribosome. Its function is as follows. The globular domain of the protein is located near the polypeptide exit tunnel on the outside of the subunit, while an extended beta-hairpin is found that lines the wall of the exit tunnel in the center of the 70S ribosome. The sequence is that of Large ribosomal subunit protein uL22 from Prochlorococcus marinus subsp. pastoris (strain CCMP1986 / NIES-2087 / MED4).